A 476-amino-acid polypeptide reads, in one-letter code: ATP synthase subunit beta (476 aa).

161 to 168 (GGAGVGKT) is an ATP binding site.

It belongs to the ATPase alpha/beta chains family. In terms of assembly, F-type ATPases have 2 components, CF(1) - the catalytic core - and CF(0) - the membrane proton channel. CF(1) has five subunits: alpha(3), beta(3), gamma(1), delta(1), epsilon(1). CF(0) has three main subunits: a(1), b(2) and c(9-12). The alpha and beta chains form an alternating ring which encloses part of the gamma chain. CF(1) is attached to CF(0) by a central stalk formed by the gamma and epsilon chains, while a peripheral stalk is formed by the delta and b chains.

The protein resides in the cell membrane. It catalyses the reaction ATP + H2O + 4 H(+)(in) = ADP + phosphate + 5 H(+)(out). Produces ATP from ADP in the presence of a proton gradient across the membrane. The catalytic sites are hosted primarily by the beta subunits. This is ATP synthase subunit beta from Mycolicibacterium gilvum (strain PYR-GCK) (Mycobacterium gilvum (strain PYR-GCK)).